The chain runs to 77 residues: Conotoxin PnMKLT1-0122 (77 aa).

An N-terminal signal peptide occupies residues 1–22 (MKLTCMMIVAVLFLTAWTFATA). Positions 23 to 49 (EDPRNGLENLFSKAHHEMKNPEDSKLN) are excised as a propeptide. 3 disulfide bridges follow: Cys-52/Cys-67, Cys-59/Cys-71, and Cys-66/Cys-76.

This sequence belongs to the conotoxin O1 superfamily. Expressed by the venom duct.

The protein localises to the secreted. In Conus pennaceus (Feathered cone), this protein is Conotoxin PnMKLT1-0122.